A 122-amino-acid polypeptide reads, in one-letter code: NADPH-dependent 7-cyano-7-deazaguanine reductase (122 aa).

The active-site Thioimide intermediate is Cys-34. Asp-41 (proton donor) is an active-site residue. Residues 56–58 and 75–76 contribute to the substrate site; these read VEL and HE.

The protein belongs to the GTP cyclohydrolase I family. QueF type 1 subfamily.

It is found in the cytoplasm. The enzyme catalyses 7-aminomethyl-7-carbaguanine + 2 NADP(+) = 7-cyano-7-deazaguanine + 2 NADPH + 3 H(+). It functions in the pathway tRNA modification; tRNA-queuosine biosynthesis. Its function is as follows. Catalyzes the NADPH-dependent reduction of 7-cyano-7-deazaguanine (preQ0) to 7-aminomethyl-7-deazaguanine (preQ1). The polypeptide is NADPH-dependent 7-cyano-7-deazaguanine reductase (Anaeromyxobacter sp. (strain Fw109-5)).